The following is a 213-amino-acid chain: C-type lectin domain family 4 member C (213 aa).

The Cytoplasmic portion of the chain corresponds to 1–21; it reads MVPEEEPQDREKGLWWFQLKV. Residues 22-44 traverse the membrane as a helical; Signal-anchor for type II membrane protein segment; sequence WSMAVVSILLLSVCFTVSSVVPH. At 45 to 213 the chain is on the extracellular side; sequence NFMYSKTVKR…SICKMKKIYI (169 aa). 2 cysteine pairs are disulfide-bonded: Cys-70-Cys-82 and Cys-83-Cys-94. Positions 90 to 207 constitute a C-type lectin domain; sequence FQSSCYFIST…CHVPQKSICK (118 aa). Asn-110 and Asn-137 each carry an N-linked (GlcNAc...) asparagine glycan. Cystine bridges form between Cys-111–Cys-206 and Cys-180–Cys-198. Residue Ser-139 coordinates a carbohydrate. N-linked (GlcNAc...) asparagine glycosylation is present at Asn-164. 3 residues coordinate Ca(2+): Glu-172, Asn-174, and Glu-178. Residues Glu-178, 184 to 186, Asn-194, 194 to 195, and Gln-202 each bind a carbohydrate; these read NFR and ND. Ca(2+) contacts are provided by Asn-194 and Asp-195.

Homodimer. Expressed in plasmacytoid dendritic cells (PDCs). Constitutively expressed in immature monocyte-derived dendritic cells (iMDDC) and is significantly down-regulated upon maturation with LPS but not with TNF-alpha.

The protein resides in the cell membrane. Its function is as follows. Lectin-type cell surface receptor which may play a role in antigen capturing by dendritic cells. Specifically recognizes non-sialylated galactose-terminated biantennary glycans containing the trisaccharide epitope Gal(beta1-3/4)GlcNAc(beta1-2)Man. Binds to serum IgG. Efficiently targets ligand into antigen-processing and peptide-loading compartments for presentation to T-cells. May mediate potent inhibition of induction of IFN-alpha/beta expression in plasmacytoid dendritic cells. May act as a signaling receptor that activates protein-tyrosine kinases and mobilizes intracellular calcium. This chain is C-type lectin domain family 4 member C (CLEC4C), found in Homo sapiens (Human).